Reading from the N-terminus, the 893-residue chain is Alanine--tRNA ligase (893 aa).

Positions 573, 577, 676, and 680 each coordinate Zn(2+). Positions 853–872 are disordered; it reads LGGGGGGKDDLAQGGGQDPS.

It belongs to the class-II aminoacyl-tRNA synthetase family. It depends on Zn(2+) as a cofactor.

It localises to the cytoplasm. It catalyses the reaction tRNA(Ala) + L-alanine + ATP = L-alanyl-tRNA(Ala) + AMP + diphosphate. Its function is as follows. Catalyzes the attachment of alanine to tRNA(Ala) in a two-step reaction: alanine is first activated by ATP to form Ala-AMP and then transferred to the acceptor end of tRNA(Ala). Also edits incorrectly charged Ser-tRNA(Ala) and Gly-tRNA(Ala) via its editing domain. This chain is Alanine--tRNA ligase, found in Kineococcus radiotolerans (strain ATCC BAA-149 / DSM 14245 / SRS30216).